A 341-amino-acid chain; its full sequence is Ketol-acid reductoisomerase (NADP(+)) (341 aa).

The KARI N-terminal Rossmann domain maps to 2-181; it reads AKVYYNGDAN…GAARAGVLET (180 aa). NADP(+) is bound by residues 25-28, Arg48, Ser52, and 82-85; these read YGSQ and DEKQ. The active site involves His107. Residue Gly133 participates in NADP(+) binding. The region spanning 182–327 is the KARI C-terminal knotted domain; sequence TFKEETETDL…RELRSMMPFV (146 aa). Mg(2+) contacts are provided by Asp190, Glu194, Glu226, and Glu230. Ser251 is a binding site for substrate.

Belongs to the ketol-acid reductoisomerase family. Mg(2+) serves as cofactor.

The enzyme catalyses (2R)-2,3-dihydroxy-3-methylbutanoate + NADP(+) = (2S)-2-acetolactate + NADPH + H(+). It catalyses the reaction (2R,3R)-2,3-dihydroxy-3-methylpentanoate + NADP(+) = (S)-2-ethyl-2-hydroxy-3-oxobutanoate + NADPH + H(+). It functions in the pathway amino-acid biosynthesis; L-isoleucine biosynthesis; L-isoleucine from 2-oxobutanoate: step 2/4. Its pathway is amino-acid biosynthesis; L-valine biosynthesis; L-valine from pyruvate: step 2/4. Functionally, involved in the biosynthesis of branched-chain amino acids (BCAA). Catalyzes an alkyl-migration followed by a ketol-acid reduction of (S)-2-acetolactate (S2AL) to yield (R)-2,3-dihydroxy-isovalerate. In the isomerase reaction, S2AL is rearranged via a Mg-dependent methyl migration to produce 3-hydroxy-3-methyl-2-ketobutyrate (HMKB). In the reductase reaction, this 2-ketoacid undergoes a metal-dependent reduction by NADPH to yield (R)-2,3-dihydroxy-isovalerate. The chain is Ketol-acid reductoisomerase (NADP(+)) from Geobacillus thermodenitrificans (strain NG80-2).